The chain runs to 429 residues: MMNFLRRAVSSSKRSELIRIISVATATSGILYASTNPDARTRVSLAIPESVRESLSLLPWQISPGLIHRPEQSLFGNFVFSSRVSPKSEAPINDEKGVSVEASDSSSKPSNGYLGRDTIANAAARIGPAVVNLSVPQGFHGISMGKSIGSGTIIDADGTILTCAHVVVDFQNIRHSSKGRVDVTLQDGRTFEGVVVNADLQSDIALVKIKSKTPLPTAKLGFSSKLRPGDWVIAVGCPLSLQNTVTAGIVSCVDRKSSDLGLGGKHREYLQTDCSINAGNSGGPLVNLDGEVIGVNIMKVLAADGLGFSVPIDSVSKIIEHFKKSGRVIRPWIGLKMVELNNLIVAQLKERDPMFPDVERGVLVPTVIPGSPADRAGFKPGDVVVRFDGKPVIEIMDDRVGKRMQVVVERSNKERVTLEVIPEEANPDM.

Residues K87 to Y113 form a disordered region. The tract at residues Y113–V338 is serine protease. Residues H165, D203, and S281 each act as charge relay system in the active site. In terms of domain architecture, PDZ spans I318–E424.

The protein belongs to the peptidase S1C family.

Its function is as follows. Putative serine protease. In Arabidopsis thaliana (Mouse-ear cress), this protein is Putative protease Do-like 14 (DEGP14).